The chain runs to 209 residues: MLLAKISVVVLLLAIDGTSSSESTDNVVLSSSPDSQKAATSRHKRAPGWGKRSSLNDEDLFADSDSAQELLDSVAALKRAPGWGKRFSGLMSEGSSLEAKRAPGWGKRGQEIDVDEDGSEQEKRAPGWGKRAPGWGKRAPGWGKRAPGWGKRAPGWGKRAPGWGKRSGGDYCETLEKMVDAYIYKAVEVDSRRLADCGSGEGTNEPFRK.

The N-terminal stretch at 1-20 is a signal peptide; sequence MLLAKISVVVLLLAIDGTSS. Positions 21-39 are enriched in polar residues; sequence SESTDNVVLSSSPDSQKAA. A propeptide spans 21 to 43 (connecting peptide 1); the sequence is SESTDNVVLSSSPDSQKAATSRH. The tract at residues 21 to 56 is disordered; sequence SESTDNVVLSSSPDSQKAATSRHKRAPGWGKRSSLN. The residue at position 49 (Trp-49) is a Tryptophan amide. The propeptide at 53–77 is connecting peptide 2; it reads SSLNDEDLFADSDSAQELLDSVAAL. A tryptophan amide mark is found at Trp-83 and Trp-105. The tract at residues 98–169 is disordered; the sequence is EAKRAPGWGK…APGWGKRSGG (72 aa). The propeptide at 109-122 is connecting peptide 4; it reads GQEIDVDEDGSEQE. Tryptophan amide is present on residues Trp-128, Trp-135, Trp-142, Trp-149, Trp-156, and Trp-163. Positions 167–191 are cleaved as a propeptide — connecting peptide 5; sequence SGGDYCETLEKMVDAYIYKAVEVDS. Cys-172 and Cys-197 are oxidised to a cystine.

In terms of assembly, homodimer; disulfide-linked. Cerebral peptide 1 is expressed in the cerebral, pedal and buccal ganglia and B1 and B2 neurons. APGW-amide is expressed in buccal ganglia and several neurons.

The protein localises to the secreted. Its function is as follows. May function as a peptide transmitter. This chain is Cerebral peptide 1, found in Aplysia californica (California sea hare).